Reading from the N-terminus, the 877-residue chain is Alanine--tRNA ligase (877 aa).

Zn(2+) contacts are provided by H567, H571, C669, and H673.

It belongs to the class-II aminoacyl-tRNA synthetase family. Requires Zn(2+) as cofactor.

The protein localises to the cytoplasm. It catalyses the reaction tRNA(Ala) + L-alanine + ATP = L-alanyl-tRNA(Ala) + AMP + diphosphate. Functionally, catalyzes the attachment of alanine to tRNA(Ala) in a two-step reaction: alanine is first activated by ATP to form Ala-AMP and then transferred to the acceptor end of tRNA(Ala). Also edits incorrectly charged Ser-tRNA(Ala) and Gly-tRNA(Ala) via its editing domain. This is Alanine--tRNA ligase from Rickettsia typhi (strain ATCC VR-144 / Wilmington).